We begin with the raw amino-acid sequence, 85 residues long: Exodeoxyribonuclease 7 small subunit (85 aa).

The protein belongs to the XseB family. In terms of assembly, heterooligomer composed of large and small subunits.

It is found in the cytoplasm. The enzyme catalyses Exonucleolytic cleavage in either 5'- to 3'- or 3'- to 5'-direction to yield nucleoside 5'-phosphates.. Bidirectionally degrades single-stranded DNA into large acid-insoluble oligonucleotides, which are then degraded further into small acid-soluble oligonucleotides. The polypeptide is Exodeoxyribonuclease 7 small subunit (Alkalilimnicola ehrlichii (strain ATCC BAA-1101 / DSM 17681 / MLHE-1)).